A 109-amino-acid chain; its full sequence is Thioredoxin (109 aa).

The Thioredoxin domain maps to 2–107 (SISQVIDTSF…LLNTLQKHLK (106 aa)). Active-site nucleophile residues include C31 and C34. A disulfide bridge links C31 with C34.

Belongs to the thioredoxin family.

The protein localises to the plastid. The protein resides in the chloroplast. In terms of biological role, participates in various redox reactions through the reversible oxidation of its active center dithiol to a disulfide and catalyzes dithiol-disulfide exchange reactions. This Griffithsia pacifica (Red alga) protein is Thioredoxin (trxA).